The chain runs to 1320 residues: Inner centromere protein A (1320 aa).

Disordered stretches follow at residues 53–75 (KNSNYLNNNNNNNNNNNNNNNIS), 426–447 (QEKQQQQQEKQQEKQQQQQPVV), 611–679 (NEPI…VVPP), 701–877 (EEEE…NTAS), and 896–1215 (TKSP…DGDE). Composition is skewed to low complexity over residues 54 to 75 (NSNYLNNNNNNNNNNNNNNNIS), 429 to 447 (QQQQQEKQQEKQQQQQPVV), and 615 to 640 (QQPSSSSSQLSSSQQPSSSSSSSSSS). Positions 221-444 (QQNQFQEQHK…KQQEKQQQQQ (224 aa)) form a coiled coil. The span at 653 to 668 (TIVTSKPTNKVQPQSL) shows a compositional bias: polar residues. The span at 669–679 (NSNINNNVVPP) shows a compositional bias: low complexity. A coiled-coil region spans residues 683 to 855 (AAIANKLKKQ…QKKKTVQTIL (173 aa)). Positions 701-835 (EEEERLRKKQ…QEKEKQEKQK (135 aa)) are enriched in basic and acidic residues. Over residues 851-863 (VQTILPTPQTPSR) the composition is skewed to polar residues. Residues 864–877 (SANNNYDDAANTAS) are compositionally biased toward low complexity. Acidic residues-rich tracts occupy residues 908-926 (DDQDDDDCEDYDGTDENSE) and 934-951 (QDDSDQEIEEQFENDSDE). Residues 965–977 (NKNKNSNNSNNNN) show a composition bias toward low complexity. Over residues 981 to 1000 (QSRKDKSIVFDSDSLNRNHN) the composition is skewed to basic and acidic residues. 2 stretches are compositionally biased toward low complexity: residues 1026–1040 (SNMKNNNNNNTYSNS) and 1047–1061 (SPPSSVSDYSPSSES). A compositionally biased stretch (polar residues) spans 1062–1071 (NDCFSPLTPT). The span at 1072–1096 (NNNKINNNKINNNNSNNNSFNNSNS) shows a compositional bias: low complexity. Residues 1120–1136 (SKTSPFLTIRNTPSPLK) show a composition bias toward polar residues. Residues 1143-1154 (NMSSASSLSSFD) show a composition bias toward low complexity. The span at 1155–1170 (SDNDSDYNDNDIDDGE) shows a compositional bias: acidic residues. The span at 1175–1187 (PNENFTTPLKNQE) shows a compositional bias: polar residues. Over residues 1188–1198 (NNNNNNSNNSN) the composition is skewed to low complexity. The segment covering 1199-1209 (TQYPIITSPPS) has biased composition (polar residues).

It belongs to the INCENP family. In terms of assembly, interacts with aurK.

The protein resides in the chromosome. It localises to the centromere. It is found in the cytoplasm. Its subcellular location is the cytoskeleton. The protein localises to the spindle. The protein resides in the nucleus. It localises to the cleavage furrow. Chromosomal passenger protein that seems to be required for chromosome segregation and the onset of cytokinesis during mitosis. Plays a key role in the abscission of daughter cells at the end of cytokinesis and in the establishment or maintenance of a bipolar spindle. In Dictyostelium discoideum (Social amoeba), this protein is Inner centromere protein A (icpA).